Consider the following 671-residue polypeptide: Preterminal protein (671 aa).

The Nuclear localization signal motif lies at 380–389 (RLPVRRRRRR). The disordered stretch occupies residues 386 to 411 (RRRRVPPPPPPPEEEEGEALMEEEIE). The segment covering 397–411 (PEEEEGEALMEEEIE) has biased composition (acidic residues). S580 is subject to O-(5'-phospho-DNA)-serine. Residues 645–671 (GADVPLPPLPAGPEPPLPPGARPRHRF) are disordered. Residues 649–665 (PLPPLPAGPEPPLPPGA) show a composition bias toward pro residues.

Belongs to the adenoviridae terminal protein family. In terms of assembly, heterodimer with the polymerase; this heterodimer binds to bp 9 to 18 of the genome. Interacts with host POU2F1; POU2F1 binds to the auxiliary sequences in the inverted terminal repeats and tethers the pTP-POL heterodimer to the origin DNA thereby participating in the assembly of the pre-initiation complex (POL-TP-DBP-NFIA-POU2F1). Preterminal protein is used to replicate viral genome, upon genomic encapsidation it is processed first into iTP and finally into TP by adenovirus protease.

It is found in the host nucleus matrix. Its function is as follows. Protein covalently bound to the viral DNA that acts as a primer for viral genomic replication by DNA strand displacement. Assembles on the viral origin of replication in an initiation complex with viral polymerase, DBP, host NFIA and host POU2F1/OCT1. During initiation, the polymerase covalently couples the first dCTP with Ser-580 of pTP. The terminal protein stimulates the template activity over 20 fold compared to protein-free templates. Neo-synthesized viral genomes are linked to two preterminal proteins, one for each 5' end. These new genomes are encapsidated in the nucleus, and during capsid maturation by viral protease, preterminal protein is first cleaved into intermediary (iTP), then into mature TP. May play a role in host nuclear matrix localization of genomic DNA. This Human adenovirus C serotype 5 (HAdV-5) protein is Preterminal protein.